We begin with the raw amino-acid sequence, 363 residues long: Phosphoserine aminotransferase (363 aa).

L-glutamate is bound at residue Arg42. Pyridoxal 5'-phosphate is bound by residues 76–77 (AS), Trp101, Thr151, Asp170, and Gln193. Lys194 is subject to N6-(pyridoxal phosphate)lysine. 234–235 (NT) contributes to the pyridoxal 5'-phosphate binding site.

The protein belongs to the class-V pyridoxal-phosphate-dependent aminotransferase family. SerC subfamily. In terms of assembly, homodimer. The cofactor is pyridoxal 5'-phosphate.

The protein resides in the cytoplasm. The enzyme catalyses O-phospho-L-serine + 2-oxoglutarate = 3-phosphooxypyruvate + L-glutamate. The catalysed reaction is 4-(phosphooxy)-L-threonine + 2-oxoglutarate = (R)-3-hydroxy-2-oxo-4-phosphooxybutanoate + L-glutamate. It functions in the pathway amino-acid biosynthesis; L-serine biosynthesis; L-serine from 3-phospho-D-glycerate: step 2/3. In terms of biological role, catalyzes the reversible conversion of 3-phosphohydroxypyruvate to phosphoserine and of 3-hydroxy-2-oxo-4-phosphonooxybutanoate to phosphohydroxythreonine. This chain is Phosphoserine aminotransferase, found in Listeria innocua serovar 6a (strain ATCC BAA-680 / CLIP 11262).